The chain runs to 275 residues: Nitrogenase iron protein 1 (275 aa).

Residue 9–16 coordinates ATP; it reads GKGGIGKS. Cys-97 provides a ligand contact to [4Fe-4S] cluster. An ADP-ribosylarginine; by dinitrogenase reductase ADP-ribosyltransferase modification is found at Arg-100. [4Fe-4S] cluster is bound at residue Cys-132.

It belongs to the NifH/BchL/ChlL family. Homodimer. Requires [4Fe-4S] cluster as cofactor. The reversible ADP-ribosylation of Arg-100 inactivates the nitrogenase reductase and regulates nitrogenase activity.

The enzyme catalyses N2 + 8 reduced [2Fe-2S]-[ferredoxin] + 16 ATP + 16 H2O = H2 + 8 oxidized [2Fe-2S]-[ferredoxin] + 2 NH4(+) + 16 ADP + 16 phosphate + 6 H(+). Its function is as follows. The key enzymatic reactions in nitrogen fixation are catalyzed by the nitrogenase complex, which has 2 components: the iron protein and the molybdenum-iron protein. The polypeptide is Nitrogenase iron protein 1 (nifH1) (Methanothermobacter marburgensis (strain ATCC BAA-927 / DSM 2133 / JCM 14651 / NBRC 100331 / OCM 82 / Marburg) (Methanobacterium thermoautotrophicum)).